Consider the following 240-residue polypeptide: Ubiquinone biosynthesis O-methyltransferase (240 aa).

S-adenosyl-L-methionine contacts are provided by Arg-44, Gly-64, Asp-85, and Met-129.

The protein belongs to the methyltransferase superfamily. UbiG/COQ3 family.

The enzyme catalyses a 3-demethylubiquinol + S-adenosyl-L-methionine = a ubiquinol + S-adenosyl-L-homocysteine + H(+). It catalyses the reaction a 3-(all-trans-polyprenyl)benzene-1,2-diol + S-adenosyl-L-methionine = a 2-methoxy-6-(all-trans-polyprenyl)phenol + S-adenosyl-L-homocysteine + H(+). The protein operates within cofactor biosynthesis; ubiquinone biosynthesis. In terms of biological role, O-methyltransferase that catalyzes the 2 O-methylation steps in the ubiquinone biosynthetic pathway. The sequence is that of Ubiquinone biosynthesis O-methyltransferase from Escherichia coli O8 (strain IAI1).